Reading from the N-terminus, the 52-residue chain is uncharacterized protein (52 aa).

This is an uncharacterized protein from Homo sapiens (Human).